The primary structure comprises 142 residues: MIKKDKNELNEMEYLVTQENGTEPPFQNEYWNHFDKGIYVDKISGKPLFTSEEKFESNCGWPSFSKSIDDDEIIELVDKTFGMIRTEVRSEDANSHLGHVFNDGPKESGGLRYCINSAAIQFIPYDKLEELGYGDLIPHFEK.

In terms of domain architecture, MsrB spans 2-125 (IKKDKNELNE…NSAAIQFIPY (124 aa)). Residue Cys114 is the Nucleophile of the active site.

This sequence belongs to the MsrB Met sulfoxide reductase family.

The enzyme catalyses L-methionyl-[protein] + [thioredoxin]-disulfide + H2O = L-methionyl-(R)-S-oxide-[protein] + [thioredoxin]-dithiol. This is Peptide methionine sulfoxide reductase MsrB from Staphylococcus haemolyticus (strain JCSC1435).